Reading from the N-terminus, the 296-residue chain is Heme oxygenase 1 (296 aa).

The Cytoplasmic portion of the chain corresponds to 1-273 (METSQPHNAE…RMQADMLTTS (273 aa)). Heme b is bound by residues Lys-21, His-28, Tyr-137, and Arg-186. Residues 231-264 (GHAVQPKAELRTRSVNKSHENSPAAGKESERTSR) form a disordered region. The span at 238–250 (AELRTRSVNKSHE) shows a compositional bias: basic and acidic residues. Residues 274–296 (PLVRWLLALGFIATTVAVGLFAM) form a helical; Anchor for type IV membrane protein membrane-spanning segment.

Belongs to the heme oxygenase family. Homodimer and higher order homooligomer. Oligomerization is crucial for its stability and function in the endoplasmic reticulum. Post-translationally, a soluble form arises by proteolytic removal of the membrane anchor.

The protein resides in the endoplasmic reticulum membrane. The enzyme catalyses heme b + 3 reduced [NADPH--hemoprotein reductase] + 3 O2 = biliverdin IXalpha + CO + Fe(2+) + 3 oxidized [NADPH--hemoprotein reductase] + 3 H2O + H(+). Its activity is regulated as follows. Inhibited by metalloporphyrins in the following order of decreasing potency: tin mesoporphyrin &gt; tin protoporphyrin &gt; zinc protoporphyrin &gt; manganese protoporphyrin &gt; cobalt protoporphyrin. Its function is as follows. Catalyzes the oxidative cleavage of heme at the alpha-methene bridge carbon, released as carbon monoxide (CO), to generate biliverdin IXalpha, while releasing the central heme iron chelate as ferrous iron. Affords protection against programmed cell death and this cytoprotective effect relies on its ability to catabolize free heme and prevent it from sensitizing cells to undergo apoptosis. Functionally, catalyzes the oxidative cleavage of heme at the alpha-methene bridge carbon, released as carbon monoxide (CO), to generate biliverdin IXalpha, while releasing the central heme iron chelate as ferrous iron. In Gallus gallus (Chicken), this protein is Heme oxygenase 1 (HMOX1).